A 434-amino-acid polypeptide reads, in one-letter code: Cobyrinate a,c-diamide synthase (434 aa).

In terms of domain architecture, GATase cobBQ-type spans 240-430 (KAYVAYDSAF…SHFHFSRTRR (191 aa)). Residue Cys322 is the Nucleophile of the active site.

Belongs to the CobB/CbiA family. It depends on Mg(2+) as a cofactor.

It catalyses the reaction cob(II)yrinate + 2 L-glutamine + 2 ATP + 2 H2O = cob(II)yrinate a,c diamide + 2 L-glutamate + 2 ADP + 2 phosphate + 2 H(+). Its pathway is cofactor biosynthesis; adenosylcobalamin biosynthesis; cob(II)yrinate a,c-diamide from sirohydrochlorin (anaerobic route): step 10/10. Its function is as follows. Catalyzes the ATP-dependent amidation of the two carboxylate groups at positions a and c of cobyrinate, using either L-glutamine or ammonia as the nitrogen source. In Sulfolobus acidocaldarius (strain ATCC 33909 / DSM 639 / JCM 8929 / NBRC 15157 / NCIMB 11770), this protein is Cobyrinate a,c-diamide synthase.